The chain runs to 149 residues: Large ribosomal subunit protein uL13 (149 aa).

The protein belongs to the universal ribosomal protein uL13 family. As to quaternary structure, part of the 50S ribosomal subunit.

In terms of biological role, this protein is one of the early assembly proteins of the 50S ribosomal subunit, although it is not seen to bind rRNA by itself. It is important during the early stages of 50S assembly. In Borrelia duttonii (strain Ly), this protein is Large ribosomal subunit protein uL13.